The primary structure comprises 898 residues: Serine/threonine-protein kinase TAO3 (898 aa).

The region spanning 24 to 277 (FVGLHEIGHG…SADLLRHDFV (254 aa)) is the Protein kinase domain. ATP is bound by residues 30 to 38 (IGHGSFGAV) and lysine 53. Catalysis depends on aspartate 147, which acts as the Proton acceptor. The disordered stretch occupies residues 316-374 (TRNGPLTESQEEEEDSEHGSNLSRKMDSLGSNHSIPSMSVSTGSQSSSVSSMQEVLDES). Residues 334 to 351 (GSNLSRKMDSLGSNHSIP) show a composition bias toward polar residues. The segment covering 352–368 (SMSVSTGSQSSSVSSMQ) has biased composition (low complexity). 3 coiled-coil regions span residues 452–502 (EQEN…THAN), 548–649 (FLES…HAML), and 754–875 (LKSL…IETF). Residues 565-596 (EEMNEDHSTPKKEKQERISKHKENLQHTQAEE) are disordered.

It belongs to the protein kinase superfamily. STE Ser/Thr protein kinase family. STE20 subfamily.

The protein localises to the cytoplasm. The protein resides in the cell membrane. It localises to the membrane raft. It is found in the lipid droplet. The catalysed reaction is L-seryl-[protein] + ATP = O-phospho-L-seryl-[protein] + ADP + H(+). It catalyses the reaction L-threonyl-[protein] + ATP = O-phospho-L-threonyl-[protein] + ADP + H(+). Its function is as follows. Serine/threonine-protein kinase that acts as a regulator of the p38/MAPK14 stress-activated MAPK cascade and of the MAPK8/JNK cascade. In response to DNA damage, involved in the G2/M transition DNA damage checkpoint by activating the p38/MAPK14 stress-activated MAPK cascade, probably by mediating phosphorylation of upstream MAP kinase kinases. Inhibits basal activity of the MAPK8/JNK cascade. This Gallus gallus (Chicken) protein is Serine/threonine-protein kinase TAO3 (TAOK3).